A 1090-amino-acid polypeptide reads, in one-letter code: Protein unc-13 homolog D (1090 aa).

The C2 1 domain maps to 92 to 239 (EPEEHQQTLQ…FKEARKDKGQ (148 aa)). Asp127 and Asp133 together coordinate Ca(2+). A Phosphoserine modification is found at Ser150. Ca(2+)-binding residues include Asp206 and Asp208. The interaction with RAB27A stretch occupies residues 240-543 (DDFLGNVVLR…AKRVQDHTTV (304 aa)). The 121-residue stretch at 557 to 677 (FQLYISLKEL…RLALVYCSLI (121 aa)) folds into the MHD1 domain. The MHD2 domain occupies 788 to 895 (EDAILPLMKF…ASSRELIRKY (108 aa)). In terms of domain architecture, C2 2 spans 910-1035 (ELGAVTVKAS…PGLSGSEEPG (126 aa)). The Ca(2+) site is built by Leu940, Asp941, Asp947, Asp1005, Asp1007, and Asp1013. The tract at residues 1026–1048 (PGLSGSEEPGEVPQTRLPLTYPA) is disordered.

This sequence belongs to the unc-13 family. As to quaternary structure, interacts with DOC2A. Interacts with RAB27A. Interacts with RHOG; the interaction increases RhoG affinity to the membrane lipids, targets UNC13D to membrane lipids and facilitates cytotoxic granule (CG) docking to the plasma membrane. Ca(2+) is required as a cofactor. Expressed at high levels in spleen, thymus and leukocytes. Also expressed in lung and placenta, and at very low levels in brain, heart, skeletal muscle and kidney. Expressed in cytotoxic T-lymphocytes (CTL) and mast cells.

Its subcellular location is the cytoplasm. The protein resides in the membrane. The protein localises to the late endosome. It is found in the recycling endosome. It localises to the lysosome. Functionally, plays a role in cytotoxic granule exocytosis in lymphocytes. Required for both granule maturation and granule docking and priming at the immunologic synapse. Regulates assembly of recycling and late endosomal structures, leading to the formation of an endosomal exocytic compartment that fuses with perforin-containing granules at the immunologic synapse and licences them for exocytosis. Regulates Ca(2+)-dependent secretory lysosome exocytosis in mast cells. This is Protein unc-13 homolog D (UNC13D) from Homo sapiens (Human).